A 101-amino-acid chain; its full sequence is Integration host factor subunit beta (101 aa).

This sequence belongs to the bacterial histone-like protein family. As to quaternary structure, heterodimer of an alpha and a beta chain.

Functionally, this protein is one of the two subunits of integration host factor, a specific DNA-binding protein that functions in genetic recombination as well as in transcriptional and translational control. In Janthinobacterium sp. (strain Marseille) (Minibacterium massiliensis), this protein is Integration host factor subunit beta.